A 514-amino-acid chain; its full sequence is Major facilitator superfamily domain-containing protein 4A (514 aa).

5 helical membrane-spanning segments follow: residues 19-39 (LTYWSVFFSFGLCIAFLGPTL), 53-73 (ISWVFFSQQLCLLLGSALGGV), 82-102 (LWALFTSSLAISLVFAVIPFC), 107-127 (VLASVMALAGLAMGCIDTVAN), and 139-159 (AVFLQVLHFFVGFGALLSPLI). Residue N177 is glycosylated (N-linked (GlcNAc...) asparagine). 7 helical membrane-spanning segments follow: residues 221–241 (YAFWIMALINLPVPMAVLMLL), 307–327 (FFAIHITGALVLFMTDGLTGA), 347–367 (VAGYLPSLFWGFITLGRLLSI), 376–396 (ATMVFINVVGVVVTFLVLLIF), 400–420 (VVFLFVGTASLGLFLSSTFPS), 438–458 (VLVTGAGVGEMVLQMLVGSIF), and 466–486 (FLVCGVIFGCLAFTFYILLLF).

It belongs to the major facilitator superfamily.

It localises to the membrane. This is Major facilitator superfamily domain-containing protein 4A from Homo sapiens (Human).